Here is a 154-residue protein sequence, read N- to C-terminus: 6,7-dimethyl-8-ribityllumazine synthase (154 aa).

Residues 22-23, 56-58, and 80-82 each bind 5-amino-6-(D-ribitylamino)uracil; these read FN, SWE, and VLI. A (2S)-2-hydroxy-3-oxobutyl phosphate-binding site is contributed by 85–86; the sequence is AT. The Proton donor role is filled by histidine 88. Phenylalanine 113 contributes to the 5-amino-6-(D-ribitylamino)uracil binding site. Arginine 127 contributes to the (2S)-2-hydroxy-3-oxobutyl phosphate binding site. Residue lysine 135 coordinates 5-amino-6-(D-ribitylamino)uracil.

It belongs to the DMRL synthase family. Forms an icosahedral capsid composed of 60 subunits, arranged as a dodecamer of pentamers.

The catalysed reaction is (2S)-2-hydroxy-3-oxobutyl phosphate + 5-amino-6-(D-ribitylamino)uracil = 6,7-dimethyl-8-(1-D-ribityl)lumazine + phosphate + 2 H2O + H(+). The protein operates within cofactor biosynthesis; riboflavin biosynthesis; riboflavin from 2-hydroxy-3-oxobutyl phosphate and 5-amino-6-(D-ribitylamino)uracil: step 1/2. Functionally, catalyzes the formation of 6,7-dimethyl-8-ribityllumazine by condensation of 5-amino-6-(D-ribitylamino)uracil with 3,4-dihydroxy-2-butanone 4-phosphate. This is the penultimate step in the biosynthesis of riboflavin. This is 6,7-dimethyl-8-ribityllumazine synthase (ribH) from Aquifex aeolicus (strain VF5).